Here is a 331-residue protein sequence, read N- to C-terminus: RNA 3'-terminal phosphate cyclase (331 aa).

Residues Q100 and H276–Q280 each bind ATP. The active-site Tele-AMP-histidine intermediate is H301.

Belongs to the RNA 3'-terminal cyclase family. Type 1 subfamily.

It is found in the cytoplasm. It catalyses the reaction a 3'-end 3'-phospho-ribonucleotide-RNA + ATP = a 3'-end 2',3'-cyclophospho-ribonucleotide-RNA + AMP + diphosphate. Catalyzes the conversion of 3'-phosphate to a 2',3'-cyclic phosphodiester at the end of RNA. The mechanism of action of the enzyme occurs in 3 steps: (A) adenylation of the enzyme by ATP; (B) transfer of adenylate to an RNA-N3'P to produce RNA-N3'PP5'A; (C) and attack of the adjacent 2'-hydroxyl on the 3'-phosphorus in the diester linkage to produce the cyclic end product. The biological role of this enzyme is unknown but it is likely to function in some aspects of cellular RNA processing. This chain is RNA 3'-terminal phosphate cyclase, found in Methanococcoides burtonii (strain DSM 6242 / NBRC 107633 / OCM 468 / ACE-M).